A 933-amino-acid polypeptide reads, in one-letter code: 2-oxoglutarate dehydrogenase E1 component (933 aa).

This sequence belongs to the alpha-ketoglutarate dehydrogenase family. As to quaternary structure, homodimer. Part of the 2-oxoglutarate dehydrogenase (OGDH) complex composed of E1 (2-oxoglutarate dehydrogenase), E2 (dihydrolipoamide succinyltransferase) and E3 (dihydrolipoamide dehydrogenase); the complex contains multiple copies of the three enzymatic components (E1, E2 and E3). Interacts (via N-terminus) with SucB, the E2 component of OGDH complex. It depends on thiamine diphosphate as a cofactor.

It catalyses the reaction N(6)-[(R)-lipoyl]-L-lysyl-[protein] + 2-oxoglutarate + H(+) = N(6)-[(R)-S(8)-succinyldihydrolipoyl]-L-lysyl-[protein] + CO2. In terms of biological role, E1 component of the 2-oxoglutarate dehydrogenase (OGDH) complex which catalyzes the decarboxylation of 2-oxoglutarate, the first step in the conversion of 2-oxoglutarate to succinyl-CoA and CO(2). This Escherichia coli O157:H7 protein is 2-oxoglutarate dehydrogenase E1 component (sucA).